The chain runs to 397 residues: Protein PEP-RELATED DEVELOPMENT ARRESTED 1, chloroplastic (397 aa).

The N-terminal 52 residues, 1-52, are a transit peptide targeting the chloroplast; that stretch reads MLQSIHLRFSSTPSPSKRESLIIPSVICSFPFTSSSFRPKQTQKLKRLVQFC. Positions 315–334 are enriched in basic and acidic residues; sequence KDEGADNLSKEDDSSTEGRK. The disordered stretch occupies residues 315–351; sequence KDEGADNLSKEDDSSTEGRKPSGLNGRGSVTGRKPLP.

Interacts with FSD2 and MRL7. As to expression, highly expressed in young leaves, shoots and flowers. Expressed at low levels in stems and siliques.

It is found in the plastid. Its subcellular location is the chloroplast stroma. The protein localises to the chloroplast nucleoid. In terms of biological role, plays an essential role in early steps of chloroplast development. May be involved in the redox control of plastid gene expression by maintening the redox state around chloroplast nucleoids. May positively regulate plastid-encoded RNA polymerase (PEP) activity, through binding to FSD2. This Arabidopsis thaliana (Mouse-ear cress) protein is Protein PEP-RELATED DEVELOPMENT ARRESTED 1, chloroplastic (PRDA1).